The primary structure comprises 61 residues: Large ribosomal subunit protein uL30 (61 aa).

It belongs to the universal ribosomal protein uL30 family. In terms of assembly, part of the 50S ribosomal subunit.

In Chlorobium limicola (strain DSM 245 / NBRC 103803 / 6330), this protein is Large ribosomal subunit protein uL30.